A 142-amino-acid chain; its full sequence is Large ribosomal subunit protein uL11 (142 aa).

The protein belongs to the universal ribosomal protein uL11 family. Part of the ribosomal stalk of the 50S ribosomal subunit. Interacts with L10 and the large rRNA to form the base of the stalk. L10 forms an elongated spine to which L12 dimers bind in a sequential fashion forming a multimeric L10(L12)X complex. One or more lysine residues are methylated.

Functionally, forms part of the ribosomal stalk which helps the ribosome interact with GTP-bound translation factors. This is Large ribosomal subunit protein uL11 from Mycolicibacterium gilvum (strain PYR-GCK) (Mycobacterium gilvum (strain PYR-GCK)).